Consider the following 150-residue polypeptide: MEKRERKKIRVLAGGVFDLLHVGHIHFLSQAKSLGDELVVIVAHDETVRMQKRREPVNPAEDRAELLRALKMVDEVYIGSPGTIDYELVRKINPDIVAIGPDQRFSCERLKEELRKHGINSEVIRIPYLYKEDRAKTSKIIQRIVETYCE.

ATP is bound by residues Val16 to Phe17, His21 to His24, and Asp102.

It belongs to the archaeal FAD synthase family. Homodimer. The cofactor is a divalent metal cation.

It carries out the reaction FMN + ATP + H(+) = FAD + diphosphate. Its pathway is cofactor biosynthesis; FAD biosynthesis; FAD from FMN: step 1/1. Functionally, catalyzes the transfer of the AMP portion of ATP to flavin mononucleotide (FMN) to produce flavin adenine dinucleotide (FAD) coenzyme. This Thermococcus onnurineus (strain NA1) protein is FAD synthase.